The chain runs to 353 residues: MSKRETFNETFLKAARGEKADHTPVWYMRQAGRSQPEYRKLKEKYGLFEITHQPELCAYVTRLPVEQYGVDAAILYKDIMTPLPSIGVDVEIKNGIGPVIDQPIRSLADIEKLGQIDPEQDVPYVLETIKLLVNEQLNVPLIGFSGAPFTLASYMIEGGPSKNYNKTKAFMYSMPDAWNLLMSKLADMIIVYVKAQIEAGAKAIQIFDSWVGALNQADYRTYIKPVMNRIFSELAKENVPLIMFGVGASHLAGDWHDLPLDVVGLDWRLGIDEARSKGITKTVQGNLDPSILLAPWEVIEQKTKEILDQGMESDGFIFNLGHGVFPDVSPEVLKKLTAFVHEYSQNKKMGQYS.

Residues 29 to 33, Phe-48, Asp-78, Tyr-154, Ser-209, and His-322 contribute to the substrate site; that span reads RQAGR.

Belongs to the uroporphyrinogen decarboxylase family. As to quaternary structure, homodimer.

It localises to the cytoplasm. The enzyme catalyses uroporphyrinogen III + 4 H(+) = coproporphyrinogen III + 4 CO2. It functions in the pathway porphyrin-containing compound metabolism; protoporphyrin-IX biosynthesis; coproporphyrinogen-III from 5-aminolevulinate: step 4/4. Functionally, catalyzes the decarboxylation of four acetate groups of uroporphyrinogen-III to yield coproporphyrinogen-III. The protein is Uroporphyrinogen decarboxylase (hemE) of Bacillus subtilis (strain 168).